A 342-amino-acid chain; its full sequence is tRNA dimethylallyltransferase (342 aa).

The tract at residues 1–30 (MSANGPAAEPADGGRAVPAGGGEAVPAGGG) is disordered. Residues 19–30 (AGGGEAVPAGGG) are compositionally biased toward gly residues. Position 49 to 56 (49 to 56 (GPTAAGKS)) interacts with ATP. A substrate-binding site is contributed by 51–56 (TAAGKS). The interval 74–77 (DSMQ) is interaction with substrate tRNA.

This sequence belongs to the IPP transferase family. In terms of assembly, monomer. Mg(2+) serves as cofactor.

The catalysed reaction is adenosine(37) in tRNA + dimethylallyl diphosphate = N(6)-dimethylallyladenosine(37) in tRNA + diphosphate. Its function is as follows. Catalyzes the transfer of a dimethylallyl group onto the adenine at position 37 in tRNAs that read codons beginning with uridine, leading to the formation of N6-(dimethylallyl)adenosine (i(6)A). This Salinispora arenicola (strain CNS-205) protein is tRNA dimethylallyltransferase.